The sequence spans 601 residues: Potassium voltage-gated channel subfamily A member 5 (601 aa).

The tetramerization domain stretch occupies residues 1-200 (MEIALVPLEN…FYQLGDEAME (200 aa)). Residues 1 to 236 (MEIALVPLEN…LIFEYPESSG (236 aa)) are Cytoplasmic-facing. The interval 19–93 (GGEAGTGCSQ…DEEGEGDPAL (75 aa)) is disordered. A compositionally biased stretch (pro residues) spans 65-74 (RPLPPLPQDP). Residue K210 forms a Glycyl lysine isopeptide (Lys-Gly) (interchain with G-Cter in SUMO) linkage. Residues 237-258 (SARGIAIVSVLVILISIITFCL) traverse the membrane as a helical segment. Residues 259–312 (ETLPEFRDERELLRHPPVPHQPLGPSRGANGSGPLAPPSGPTVAPLLPRTLADP) are Extracellular-facing. Residues 275-297 (PVPHQPLGPSRGANGSGPLAPPS) form a disordered region. N-linked (GlcNAc...) asparagine glycosylation occurs at N288. The helical transmembrane segment at 313-334 (FFIVETTCVIWFTFELLVRFFA) threads the bilayer. Residue C335 is the site of S-palmitoyl cysteine attachment. Over 335-345 (CPSKAEFSRNI) the chain is Cytoplasmic. The helical transmembrane segment at 346–366 (MNIIDVVAIFPYFITLGTELA) threads the bilayer. The Extracellular segment spans residues 367 to 383 (EQPGGGGGGQNGQQAMS). Residues 384-404 (LAILRVIRLVRVFRIFKLSRH) traverse the membrane as a helical; Voltage-sensor segment. Topologically, residues 405–419 (SKGLQILGKTLQASM) are cytoplasmic. Residues 406-419 (KGLQILGKTLQASM) form an S4-S5 linker region. A helical transmembrane segment spans residues 420–441 (RELGLLIFFLFIGVILFSSAVY). Residues 442–455 (FAEADNQETHFSSI) are Extracellular-facing. An intramembrane region (helical) is located at residues 456–467 (PDAFWWAVVTMT). The short motif at 468–473 (TVGYGD) is the Selectivity filter element. An intramembrane segment occupies 468–475 (TVGYGDMR). Residues 476 to 482 (PVTVGGK) lie on the Extracellular side of the membrane. The helical transmembrane segment at 483–511 (IVGSLCAIAGVLTIALPVPVIVSNFNYFY) threads the bilayer. The Cytoplasmic segment spans residues 512-601 (HRETDHEEQA…CLDTSRETDL (90 aa)). The interval 521–545 (AALKEEQGSQSHGTGLDSGGPRKAS) is disordered. A Glycyl lysine isopeptide (Lys-Gly) (interchain with G-Cter in SUMO) cross-link involves residue K524. The PDZ-binding signature appears at 599 to 601 (TDL).

This sequence belongs to the potassium channel family. A (Shaker) (TC 1.A.1.2) subfamily. Kv1.5/KCNA5 sub-subfamily. In terms of assembly, homotetramer and heterotetramer of potassium channel proteins. Interacts with DLG1, which enhances channel currents. Forms a ternary complex with DLG1 and CAV3. Interacts with KCNAB1. Interacts with UBE2I. Interacts with XIRP2; the interaction is required for normal action potential configuration in the heart. Glycosylated. In terms of processing, sumoylated on Lys-210, and Lys-524, preferentially with SUMO3. Sumoylation regulates the voltage sensitivity of the channel.

Its subcellular location is the cell membrane. The catalysed reaction is K(+)(in) = K(+)(out). In terms of biological role, voltage-gated potassium channel that mediates transmembrane potassium transport in excitable membranes. Forms tetrameric potassium-selective channels through which potassium ions pass in accordance with their electrochemical gradient. The channel alternates between opened and closed conformations in response to the voltage difference across the membrane. Can form functional homotetrameric channels and heterotetrameric channels that contain variable proportions of KCNA1, KCNA2, KCNA4, KCNA5, and possibly other family members as well; channel properties depend on the type of alpha subunits that are part of the channel. Channel properties are modulated by cytoplasmic beta subunits that regulate the subcellular location of the alpha subunits and promote rapid inactivation. Homotetrameric channels display rapid activation and slow inactivation. Required for normal electrical conduction including formation of the infranodal ventricular conduction system and normal action potential configuration, as a result of its interaction with XIRP2. May play a role in regulating the secretion of insulin in normal pancreatic islets. This Mustela putorius furo (European domestic ferret) protein is Potassium voltage-gated channel subfamily A member 5 (KCNA5).